A 130-amino-acid chain; its full sequence is MAQTTRKSTIRKEKNSFTSGVVHIQSTFNNTIVTITNLTGDTISWASAGSSGFKGARKSTPFAAQTAAEKAALEALSTGMKTVEILVKGQGSGRETAIRAIEGAGFDIISIQDITSVPHNGCRPPKRRRV.

The protein belongs to the universal ribosomal protein uS11 family. Part of the 30S ribosomal subunit.

The protein localises to the plastid. It is found in the chloroplast. The chain is Small ribosomal subunit protein uS11c from Phaeodactylum tricornutum (strain CCAP 1055/1).